The following is a 203-amino-acid chain: V-type ATP synthase subunit D (203 aa).

This sequence belongs to the V-ATPase D subunit family.

In terms of biological role, produces ATP from ADP in the presence of a proton gradient across the membrane. The sequence is that of V-type ATP synthase subunit D from Streptococcus pneumoniae (strain Hungary19A-6).